Here is a 265-residue protein sequence, read N- to C-terminus: 3-methyl-2-oxobutanoate hydroxymethyltransferase (265 aa).

D45 and D84 together coordinate Mg(2+). 3-methyl-2-oxobutanoate contacts are provided by residues 45–46 (DS), D84, and K112. E114 contributes to the Mg(2+) binding site. Catalysis depends on E181, which acts as the Proton acceptor.

Belongs to the PanB family. Homodecamer; pentamer of dimers. Mg(2+) serves as cofactor.

The protein resides in the cytoplasm. The catalysed reaction is 3-methyl-2-oxobutanoate + (6R)-5,10-methylene-5,6,7,8-tetrahydrofolate + H2O = 2-dehydropantoate + (6S)-5,6,7,8-tetrahydrofolate. Its pathway is cofactor biosynthesis; (R)-pantothenate biosynthesis; (R)-pantoate from 3-methyl-2-oxobutanoate: step 1/2. Catalyzes the reversible reaction in which hydroxymethyl group from 5,10-methylenetetrahydrofolate is transferred onto alpha-ketoisovalerate to form ketopantoate. In Yersinia pestis bv. Antiqua (strain Antiqua), this protein is 3-methyl-2-oxobutanoate hydroxymethyltransferase.